We begin with the raw amino-acid sequence, 183 residues long: ATP-dependent protease subunit HslV (183 aa).

Residue Thr7 is part of the active site. Residues Gly162, Cys165, and Thr168 each contribute to the Na(+) site.

It belongs to the peptidase T1B family. HslV subfamily. In terms of assembly, a double ring-shaped homohexamer of HslV is capped on each side by a ring-shaped HslU homohexamer. The assembly of the HslU/HslV complex is dependent on binding of ATP.

The protein localises to the cytoplasm. The enzyme catalyses ATP-dependent cleavage of peptide bonds with broad specificity.. Its activity is regulated as follows. Allosterically activated by HslU binding. In terms of biological role, protease subunit of a proteasome-like degradation complex believed to be a general protein degrading machinery. In Alkalilimnicola ehrlichii (strain ATCC BAA-1101 / DSM 17681 / MLHE-1), this protein is ATP-dependent protease subunit HslV.